A 337-amino-acid chain; its full sequence is 15-cis-phytoene synthase (337 aa).

Belongs to the phytoene/squalene synthase family. Requires ATP as cofactor. It depends on Mn(2+) as a cofactor. Mg(2+) serves as cofactor.

The enzyme catalyses 2 (2E,6E,10E)-geranylgeranyl diphosphate = 15-cis-phytoene + 2 diphosphate. It functions in the pathway carotenoid biosynthesis; phytoene biosynthesis. In terms of biological role, involved in the biosynthesis of carotenoids. Catalyzes the condensation of two molecules of geranylgeranyl diphosphate (GGPP) to give prephytoene diphosphate (PPPP) and the subsequent rearrangement of the cyclopropylcarbinyl intermediate to yield 15-cis-phytoene. This Synechocystis sp. (strain ATCC 27184 / PCC 6803 / Kazusa) protein is 15-cis-phytoene synthase (crtB).